The primary structure comprises 511 residues: Sodium/proline symporter (511 aa).

The next 13 membrane-spanning stretches (helical) occupy residues 16–36 (WQTY…GFYG), 54–74 (IGPY…WMIM), 85–105 (LSAI…YFVV), 139–159 (IISG…GFVS), 175–195 (GLLI…YLAV), 199–219 (DFFQ…VALL), 246–266 (VLGI…PHII), 284–304 (LGIS…LTGI), 327–347 (ILFH…AIMS), 381–401 (FVLI…TIAW), 407–427 (ILNL…PLVL), 438–458 (AGAI…ISWI), and 467–487 (FFGM…TYIV).

The protein belongs to the sodium:solute symporter (SSF) (TC 2.A.21) family.

Its subcellular location is the cell membrane. It catalyses the reaction L-proline(in) + Na(+)(in) = L-proline(out) + Na(+)(out). Functionally, catalyzes the sodium-dependent uptake of extracellular L-proline. The protein is Sodium/proline symporter (putP) of Staphylococcus epidermidis (strain ATCC 12228 / FDA PCI 1200).